The chain runs to 421 residues: Alpha-1-antitrypsin (421 aa).

A signal peptide spans 1–24 (MASSSTWGLLLLAGLCCLVPISLA). N-linked (GlcNAc...) asparagine glycans are attached at residues Asn-73 and Asn-110. The RCL stretch occupies residues 376 to 395 (GATILEAIPMSIPPNVKFNK). A Phosphoserine modification is found at Ser-386.

It belongs to the serpin family. Interacts with CELA2A. Interacts with ERGIC3 and LMAN1/ERGIC53. Interacts with PRSS1/Trypsin.

It is found in the secreted. In terms of biological role, inhibitor of serine proteases. Its primary target is elastase, but it also has a moderate affinity for plasmin and thrombin. This chain is Alpha-1-antitrypsin (SERPINA1), found in Sus scrofa (Pig).